Here is a 75-residue protein sequence, read N- to C-terminus: Large ribosomal subunit protein bL31 (75 aa).

4 residues coordinate Zn(2+): Cys16, Cys18, Cys37, and Cys40.

It belongs to the bacterial ribosomal protein bL31 family. Type A subfamily. In terms of assembly, part of the 50S ribosomal subunit. Zn(2+) is required as a cofactor.

Binds the 23S rRNA. This Pseudomonas syringae pv. tomato (strain ATCC BAA-871 / DC3000) protein is Large ribosomal subunit protein bL31.